The sequence spans 662 residues: Pro-neuregulin-1, membrane-bound isoform (662 aa).

Residues 1 to 13 constitute a propeptide that is removed on maturation; it reads MSERKEGRGKGKG. The tract at residues 1-52 is disordered; that stretch reads MSERKEGRGKGKGKKKDRGSRGKPGPAEGDPSPALPPRLKEMKSQESAAGSK. The Extracellular portion of the chain corresponds to 14–265; it reads KKKDRGSRGK…SKAEELYQKR (252 aa). The Ig-like C2-type domain occupies 37–128; it reads PRLKEMKSQE…GNDSASANIT (92 aa). Residues C57 and C112 are joined by a disulfide bond. N-linked (GlcNAc...) asparagine glycans are attached at residues N120, N126, and N164. The EGF-like domain occupies 178–222; that stretch reads HLIKCAEKEKTFCVNGGECFTVKDLSNPSRYLCKCPNEFTGDRCQ. 3 disulfide bridges follow: C182–C196, C190–C210, and C212–C221. The chain crosses the membrane as a helical span at residues 266–288; sequence VLTITGICIALLVVGIMCVVAYC. Residues 289–662 are Cytoplasmic-facing; that stretch reads KTKKQRQKLH…VIANQDPIAV (374 aa). Residues 358 to 373 show a composition bias toward low complexity; that stretch reads SHYTSTAHHSTTVTQT. Disordered stretches follow at residues 358–383, 398–480, and 547–610; these read SHYT…NGHT, SVEN…PVSS, and YETT…DTPF. Polar residues predominate over residues 374-383; the sequence is PSHSWSNGHT. Residues 410-420 are compositionally biased toward gly residues; sequence GPRGRLHGLGG. Basic and acidic residues predominate over residues 425-445; the sequence is SFLRHARETPDSYRDSPHSER. A compositionally biased stretch (basic residues) spans 564-574; the sequence is TNSRRAKRTKP. Low complexity predominate over residues 585 to 596; it reads DSNTSSVSSNSE.

The protein belongs to the neuregulin family. The cytoplasmic domain interacts with the LIM domain region of LIMK1. Forms a ternary complex with ERBB3 and ITGAV:ITGB3 or ITGA6:ITGB4. Interacts with NRDC and BACE1. In terms of processing, proteolytic cleavage close to the plasma membrane on the external face leads to the release of the soluble growth factor form. N- and O-glycosylated. Extensive glycosylation precedes the proteolytic cleavage. As to expression, widely expressed. Most tissues contain isoform alpha2A and isoform alpha2B. Isoform Alpha2 and isoform beta2 are the predominant forms in mesenchymal and non-neuronal organs. Isoform Beta1 is enriched in brain and spinal cord, but not in muscle and heart. Isoform Alpha2C is highly expressed in spinal cord, moderately in lung, brain, ovary, and stomach, in low amounts in the kidney, skin and heart and not detected in the liver, spleen, and placenta.

Its subcellular location is the cell membrane. It is found in the secreted. Direct ligand for ERBB3 and ERBB4 tyrosine kinase receptors. Concomitantly recruits ERBB1 and ERBB2 coreceptors, resulting in ligand-stimulated tyrosine phosphorylation and activation of the ERBB receptors. The multiple isoforms perform diverse functions such as inducing growth and differentiation of epithelial, glial, neuronal, and skeletal muscle cells; inducing expression of acetylcholine receptor in synaptic vesicles during the formation of the neuromuscular junction; stimulating lobuloalveolar budding and milk production in the mammary gland and inducing differentiation of mammary tumor cells; stimulating Schwann cell proliferation; implication in the development of the myocardium such as trabeculation of the developing heart. Binds to ERBB4 and ERBB3. Acts as a ligand for integrins and binds (via EGF domain) to integrins ITGAV:ITGB3 or ITGA6:ITGB4. Its binding to integrins and subsequent ternary complex formation with integrins and ERRB3 are essential for NRG1-ERBB signaling. Induces the phosphorylation and activation of MAPK3/ERK1, MAPK1/ERK2 and AKT1, and ligand-dependent ERBB4 endocytosis is essential for the NRG1-mediated activation of these kinases in neurons. The chain is Pro-neuregulin-1, membrane-bound isoform (Nrg1) from Rattus norvegicus (Rat).